The primary structure comprises 683 residues: MEEERVEGSKRPFQGIIRDVKGRALCYKQDWIAGLRSGFGILAPTTYVFFASALPVIAFGEQLSHDTERSLSTVETLASTALCGVIHSLLGGQPLLILGVAEPTVLMYKYLYDFAKGRPELGKQLYLAWVAWVCVWTALLLFLMAIFNMAYIINRFTRIAGELFGMLIAVLFLQQTIKGMVSEFRIPKGEDSKLEKYQFEWLYTNGLLGLIFTVGLVYTALKSRKARSWPYGTGCCRSFVADYGVPLMVVVWTALSFSTPSKLPSGVPRRLVSPLPWDSVSLTHWTVIKDMGKVSPGYIFAAFIPALMIAGLYFFDHSVVSQLAQQKEFNLKNPSAYHYDILLLGFMVLICGMLGLPPSNGVLPQSPMHTKSLAVFKRQLMRRKMVMTAKESIRQKATSSQVYEDMEQVFIEMDKSPLAETHTTLINELQDLKEAVMKKSDDDGDTGEESGFDPEKHVDAYLPVRVNEQRVSNLLQSLLVIGAVFALPVIKLIPTSLLWGYFAYMAIDSLPDNQFFERTVLLFVPPTRRFKVLEGAHASFVEKVPHKSIAAFTLFQILYFGLCYGVTWIPVAGIMFPVLFFLLVAIRQYLLPKLFKPAYLRELDAAEYEEIPGTPRNPLELSFRSNNSARGVQECDAEILDELTTSRGELKVRTLGHNEDKGHQIYPKEIVEVGDGDMSSSRE.

Residues 1–38 lie on the Cytoplasmic side of the membrane; that stretch reads MEEERVEGSKRPFQGIIRDVKGRALCYKQDWIAGLRSG. A helical membrane pass occupies residues 39–59; the sequence is FGILAPTTYVFFASALPVIAF. Residues 60–80 are Extracellular-facing; that stretch reads GEQLSHDTERSLSTVETLAST. The helical transmembrane segment at 81 to 101 threads the bilayer; the sequence is ALCGVIHSLLGGQPLLILGVA. Over 102–126 the chain is Cytoplasmic; the sequence is EPTVLMYKYLYDFAKGRPELGKQLY. A helical membrane pass occupies residues 127-147; that stretch reads LAWVAWVCVWTALLLFLMAIF. Residues 148 to 158 are Extracellular-facing; sequence NMAYIINRFTR. Residues 159–179 traverse the membrane as a helical segment; that stretch reads IAGELFGMLIAVLFLQQTIKG. Over 180–200 the chain is Cytoplasmic; sequence MVSEFRIPKGEDSKLEKYQFE. Residues 201–221 traverse the membrane as a helical segment; it reads WLYTNGLLGLIFTVGLVYTAL. Residues 222–238 lie on the Extracellular side of the membrane; the sequence is KSRKARSWPYGTGCCRS. A helical transmembrane segment spans residues 239–259; that stretch reads FVADYGVPLMVVVWTALSFST. Residues 260-294 are Cytoplasmic-facing; that stretch reads PSKLPSGVPRRLVSPLPWDSVSLTHWTVIKDMGKV. The helical transmembrane segment at 295–315 threads the bilayer; the sequence is SPGYIFAAFIPALMIAGLYFF. The Extracellular portion of the chain corresponds to 316–335; the sequence is DHSVVSQLAQQKEFNLKNPS. Residues 336–356 form a helical membrane-spanning segment; the sequence is AYHYDILLLGFMVLICGMLGL. The Cytoplasmic portion of the chain corresponds to 357–477; sequence PPSNGVLPQS…EQRVSNLLQS (121 aa). The helical transmembrane segment at 478–498 threads the bilayer; sequence LLVIGAVFALPVIKLIPTSLL. Topologically, residues 499-565 are extracellular; it reads WGYFAYMAID…QILYFGLCYG (67 aa). Residues 566 to 586 form a helical membrane-spanning segment; that stretch reads VTWIPVAGIMFPVLFFLLVAI. The Cytoplasmic segment spans residues 587 to 683; the sequence is RQYLLPKLFK…GDGDMSSSRE (97 aa).

Belongs to the anion exchanger (TC 2.A.31.3) family.

It localises to the membrane. In terms of biological role, putative boron transporter. Boron is essential for maintaining the integrity of plants cell walls. The protein is Putative boron transporter 5 (BOR5) of Arabidopsis thaliana (Mouse-ear cress).